Reading from the N-terminus, the 193-residue chain is uncharacterized protein (193 aa).

Disordered stretches follow at residues 1–67 (MSGP…GPRS) and 110–160 (QRTP…LPGS). Low complexity-rich tracts occupy residues 50-64 (GPQRGPRNAAAARPG) and 148-160 (AGASPGSRLLPGS).

This is an uncharacterized protein from Homo sapiens (Human).